The primary structure comprises 311 residues: Aspartate carbamoyltransferase catalytic subunit (311 aa).

Residues Arg55 and Thr56 each coordinate carbamoyl phosphate. An L-aspartate-binding site is contributed by Lys85. Carbamoyl phosphate contacts are provided by Arg106, His134, and Gln137. Residues Arg167 and Arg228 each contribute to the L-aspartate site. Residues Leu266 and Pro267 each coordinate carbamoyl phosphate.

Belongs to the aspartate/ornithine carbamoyltransferase superfamily. ATCase family. As to quaternary structure, heterododecamer (2C3:3R2) of six catalytic PyrB chains organized as two trimers (C3), and six regulatory PyrI chains organized as three dimers (R2).

It catalyses the reaction carbamoyl phosphate + L-aspartate = N-carbamoyl-L-aspartate + phosphate + H(+). It participates in pyrimidine metabolism; UMP biosynthesis via de novo pathway; (S)-dihydroorotate from bicarbonate: step 2/3. Functionally, catalyzes the condensation of carbamoyl phosphate and aspartate to form carbamoyl aspartate and inorganic phosphate, the committed step in the de novo pyrimidine nucleotide biosynthesis pathway. This Psychromonas ingrahamii (strain DSM 17664 / CCUG 51855 / 37) protein is Aspartate carbamoyltransferase catalytic subunit.